The primary structure comprises 89 residues: Small ribosomal subunit protein uS14A (89 aa).

This sequence belongs to the universal ribosomal protein uS14 family. As to quaternary structure, part of the 30S ribosomal subunit. Contacts proteins S3 and S10.

Binds 16S rRNA, required for the assembly of 30S particles and may also be responsible for determining the conformation of the 16S rRNA at the A site. This Listeria monocytogenes serotype 4b (strain F2365) protein is Small ribosomal subunit protein uS14A.